The sequence spans 157 residues: Protein NrdI (157 aa).

The protein belongs to the NrdI family.

Functionally, probably involved in ribonucleotide reductase function. The polypeptide is Protein NrdI (Mycoplasma mycoides subsp. mycoides SC (strain CCUG 32753 / NCTC 10114 / PG1)).